The primary structure comprises 77 residues: Acyl carrier protein (77 aa).

Residues 2 to 77 (SNIEERVKKI…AAIDYVTANQ (76 aa)) enclose the Carrier domain. S37 carries the post-translational modification O-(pantetheine 4'-phosphoryl)serine.

It belongs to the acyl carrier protein (ACP) family. Post-translationally, 4'-phosphopantetheine is transferred from CoA to a specific serine of apo-ACP by AcpS. This modification is essential for activity because fatty acids are bound in thioester linkage to the sulfhydryl of the prosthetic group.

Its subcellular location is the cytoplasm. It participates in lipid metabolism; fatty acid biosynthesis. Functionally, carrier of the growing fatty acid chain in fatty acid biosynthesis. The polypeptide is Acyl carrier protein (Colwellia psychrerythraea (strain 34H / ATCC BAA-681) (Vibrio psychroerythus)).